We begin with the raw amino-acid sequence, 691 residues long: DNA ligase (691 aa).

Residues 41–45, 90–91, and glutamate 130 contribute to the NAD(+) site; these read DAEYD and SL. Lysine 132 (N6-AMP-lysine intermediate) is an active-site residue. Residues arginine 153, glutamate 190, lysine 307, and lysine 331 each contribute to the NAD(+) site. Zn(2+) is bound by residues cysteine 425, cysteine 428, cysteine 443, and cysteine 449. Residues 610–691 enclose the BRCT domain; sequence APQGVLAGKT…MHTLLEGHAR (82 aa).

Belongs to the NAD-dependent DNA ligase family. LigA subfamily. It depends on Mg(2+) as a cofactor. Mn(2+) serves as cofactor.

The catalysed reaction is NAD(+) + (deoxyribonucleotide)n-3'-hydroxyl + 5'-phospho-(deoxyribonucleotide)m = (deoxyribonucleotide)n+m + AMP + beta-nicotinamide D-nucleotide.. Functionally, DNA ligase that catalyzes the formation of phosphodiester linkages between 5'-phosphoryl and 3'-hydroxyl groups in double-stranded DNA using NAD as a coenzyme and as the energy source for the reaction. It is essential for DNA replication and repair of damaged DNA. In Burkholderia pseudomallei (strain K96243), this protein is DNA ligase.